The following is a 249-amino-acid chain: Small ribosomal subunit protein uS3 (249 aa).

The KH type-2 domain occupies 38–106; the sequence is IRDFLSKGLE…QVQLNILEVK (69 aa). Residues 218 to 233 are compositionally biased toward basic and acidic residues; it reads ARDDRGSRRGRNDRPR. Residues 218–249 are disordered; sequence ARDDRGSRRGRNDRPRRGGGRRRRAAEQKQEG.

Belongs to the universal ribosomal protein uS3 family. Part of the 30S ribosomal subunit. Forms a tight complex with proteins S10 and S14.

Its function is as follows. Binds the lower part of the 30S subunit head. Binds mRNA in the 70S ribosome, positioning it for translation. In Corynebacterium kroppenstedtii (strain DSM 44385 / JCM 11950 / CIP 105744 / CCUG 35717), this protein is Small ribosomal subunit protein uS3.